The primary structure comprises 435 residues: Ribosomal protein uS12 methylthiotransferase RimO (435 aa).

The region spanning 2-118 (KKFHIVKLGC…IVEKIENGEY (117 aa)) is the MTTase N-terminal domain. Residues C11, C47, C81, C150, C154, and C157 each coordinate [4Fe-4S] cluster. Positions 136–364 (IPDSHYAYVK…MTVQSEISKN (229 aa)) constitute a Radical SAM core domain. The TRAM domain occupies 367–435 (EKYIGETLEV…EYDLEGEIVE (69 aa)).

The protein belongs to the methylthiotransferase family. RimO subfamily. [4Fe-4S] cluster is required as a cofactor.

It localises to the cytoplasm. It catalyses the reaction L-aspartate(89)-[ribosomal protein uS12]-hydrogen + (sulfur carrier)-SH + AH2 + 2 S-adenosyl-L-methionine = 3-methylsulfanyl-L-aspartate(89)-[ribosomal protein uS12]-hydrogen + (sulfur carrier)-H + 5'-deoxyadenosine + L-methionine + A + S-adenosyl-L-homocysteine + 2 H(+). Catalyzes the methylthiolation of an aspartic acid residue of ribosomal protein uS12. The chain is Ribosomal protein uS12 methylthiotransferase RimO from Petrotoga mobilis (strain DSM 10674 / SJ95).